The sequence spans 314 residues: Cytochrome f (314 aa).

Positions 1 to 30 are cleaved as a signal peptide; that stretch reads MATNKFFKSLLFALTIAINSFGFCIQDAVA. The heme site is built by tyrosine 31, cysteine 51, cysteine 54, and histidine 55. The chain crosses the membrane as a helical span at residues 280–300; the sequence is IYGYLAFCFSVLITQIMLVLK.

It belongs to the cytochrome f family. The 4 large subunits of the cytochrome b6-f complex are cytochrome b6, subunit IV (17 kDa polypeptide, petD), cytochrome f and the Rieske protein, while the 4 small subunits are PetG, PetL, PetM and PetN. The complex functions as a dimer. It depends on heme as a cofactor.

The protein localises to the plastid. The protein resides in the chloroplast thylakoid membrane. In terms of biological role, component of the cytochrome b6-f complex, which mediates electron transfer between photosystem II (PSII) and photosystem I (PSI), cyclic electron flow around PSI, and state transitions. In Phaeodactylum tricornutum (strain CCAP 1055/1), this protein is Cytochrome f.